The primary structure comprises 1426 residues: MLLRRRNGPCPFPLLLLLLAHCICIWPASAARDRYARQNNRQRHQDIDRDRDRDRFLYRSSSAQNRQRGGANFALGLGANGVTIPTSLEDKNKNEFVKGKICIGTKSRLSVPSNKEHHYRNLRDRYTNCTYVDGNLKLTWLPNENLDLSFLDNIREVTGYILISHVDVKKVVFPKLQIIRGRTLFSLSVEEEKYALFVTYSKMYTLEIPDLRDVLNGQVGFHNNYNLCHMRTIQWSEIVSNGTDAYYNYDFTAPERECPKCHESCTHGCWGEGPKNCQKFSKLTCSPQCAGGRCYGPKPRECCHLFCAGGCTGPTQKDCIACKNFFDEAVSKEECPPMRKYNPTTYVLETNPEGKYAYGATCVKECPGHLLRDNGACVRSCPQDKMDKGGECVPCNGPCPKTCPGVTVLHAGNIDSFRNCTVIDGNIRILDQTFSGFQDVYANYTMGPRYIPLDPERREVFSTVKEITGYLNIEGTHPQFRNLSYFRNLETIHGRQLMESMFAALAIVKSSLYSLEMRNLKQISSGSVVIQHNRDLCYVSNIRWPAIQKEPEQKVWVNENLRADLCEKNGTICSDQCNEDGCWGAGTDQCLTCKNFNFNGTCIADCGYISNAYKFDNRTCKICHPECRTCNGAGADHCQECVHVRDGQHCVSECPKNKYNDRGVCRECHATCDGCTGPKDTIGIGACTTCNLAIINNDATVKRCLLKDDKCPDGYFWEYVHPQEQGSLKPLAGRAVCRKCHPLCELCTNYGYHEQVCSKCTHYKRREQCETECPADHYTDEEQRECFQRHPECNGCTGPGADDCKSCRNFKLFDANETGPYVNSTMFNCTSKCPLEMRHVNYQYTAIGPYCAASPPRSSKITANLDVNMIFIITGAVLVPTICILCVVTYICRQKQKAKKETVKMTMALSGCEDSEPLRPSNIGANLCKLRIVKDAELRKGGVLGMGAFGRVYKGVWVPEGENVKIPVAIKELLKSTGAESSEEFLREAYIMASEEHVNLLKLLAVCMSSQMMLITQLMPLGCLLDYVRNNRDKIGSKALLNWSTQIAKGMSYLEEKRLVHRDLAARNVLVQTPSLVKITDFGLAKLLSSDSNEYKAAGGKMPIKWLALECIRNRVFTSKSDVWAFGVTIWELLTFGQRPHENIPAKDIPDLIEVGLKLEQPEICSLDIYCTLLSCWHLDAAMRPTFKQLTTVFAEFARDPGRYLAIPGDKFTRLPAYTSQDEKDLIRKLAPTTDGSEAIAKPDDYLQPKAAPGPSHRTDCTDEMPKLNRYCKDPSNKNSSTGDDERDSSAREVGVGNLRLDLPVDEDDYLMPTCQPGPNNNNNMNNPNQNNMAAVGVAAGYMDLIGVPVSVDNPEYLLNAQTLGVGESPIPTQTIGIPVMGGPGTMEVKVPMPGSEPTSSDHEYYNDTQRELQPLHRNRNTETRV.

Residues 1–30 form the signal peptide; sequence MLLRRRNGPCPFPLLLLLLAHCICIWPASA. Topologically, residues 31–868 are extracellular; sequence ARDRYARQNN…SKITANLDVN (838 aa). N-linked (GlcNAc...) asparagine glycosylation is found at Asn-128, Asn-241, Asn-419, Asn-443, Asn-482, Asn-569, Asn-599, Asn-617, Asn-816, Asn-823, and Asn-828. The chain crosses the membrane as a helical span at residues 869-889; it reads MIFIITGAVLVPTICILCVVT. Residues 890–1426 lie on the Cytoplasmic side of the membrane; it reads YICRQKQKAK…HRNRNTETRV (537 aa). Phosphothreonine; by PKC is present on Thr-902. The region spanning 938-1198 is the Protein kinase domain; the sequence is LRKGGVLGMG…QLTTVFAEFA (261 aa). ATP contacts are provided by residues 944–952 and Lys-971; that span reads LGMGAFGRV. Catalysis depends on Asp-1063, which acts as the Proton acceptor. The interval 1232–1297 is disordered; it reads PTTDGSEAIA…DSSAREVGVG (66 aa). Over residues 1257 to 1276 the composition is skewed to basic and acidic residues; it reads HRTDCTDEMPKLNRYCKDPS. Tyr-1310 carries the phosphotyrosine; by autocatalysis modification.

Belongs to the protein kinase superfamily. Tyr protein kinase family. EGF receptor subfamily. Homodimer. Binding of the ligand spitz triggers homodimerization of the receptor however, it is able to form dimers, albeit weakly, in the absence of spitz. Interacts (when phosphorylated on tyrosine residues) with Vav (via SH2 domain). Interacts (when ubiquitinated) with Graf. May interact (when phosphorylated) with EGFRAP (via SH2 domain). In terms of processing, ubiquitination by Cbl in response to high spi, promotes its interaction with Graf and thus facilitates its GPI-enriched endocytic compartment (GEEC) mediated endocytosis and its subsequent degradation. In terms of tissue distribution, ubiquitously expressed in embryos. In larvae, uniform expression is seen in wing disks, genital disk, anlagen of testis and ovary, and brain cortex. In eye-antenna disk, highest expression is anterior to morphogenetic furrow, levels remain high in photoreceptor precursor cells. This pattern is reversed in posterior eye disk. In adults expression is high in brain cortex and thoracic and abdominal ganglia.

It localises to the membrane. The enzyme catalyses L-tyrosyl-[protein] + ATP = O-phospho-L-tyrosyl-[protein] + ADP + H(+). Receptor tyrosine kinase, binding ligands of the EGF family and activating several signaling cascades to convert extracellular cues into appropriate cellular responses. Known ligands include spitz, gurken, vein and giant-lens. Transduces the signal through the ras-raf-MAPK pathway. Critical for the proliferation of imaginal tissues, and for the determination of both the antero-posterior and dorso-ventral polarities of the oocyte. In the embryo, plays a role in the establishment of ventral cell fates, maintenance of amnioserosa and ventral neuroectodermal cells, germ band retraction, cell fate specification in the central nervous system, and production and repair of the cuticle. During dorsal closure (DC) functions with the dpp- and ACK-signaling pathways to regulate expression of the myosin zip in the embryonic epidermis and amnioserosa (AS), and thus coordinate the progression of epidermal cell shape changes required for correct DC. In the embryonic epidermis, functions by negatively regulating dpp and consequently the dpp-dependent expression of the myosin zip. In the AS, negatively regulates the production/ and or secretion of a diffusible signal which, is produced by the ACK-signaling pathway, and acts in the AS and epidermal cells to promote zip expression. Also required in the AS to inhibit or delay apoptosis, and consequently slow the rate of DC. Therefore functions at multiple levels to negatively regulate morphogenesis during DC, suggesting that it acts as a general brake mechanism for adjusting the rate of dorsal closure to ensure that closure proceeds smoothly and without loss of epidermal integrity. During oogenesis, one of two tyrosine kinase chemoattractant receptors (Egfr and Pvr), that function in the border cells (BC) to detect guidance cues from the oocyte and transduce this information to the guidance pathway that regulate the collective migration of the BC cluster through the nurse cells to the oocyte. In Drosophila melanogaster (Fruit fly), this protein is Epidermal growth factor receptor (Egfr).